Consider the following 285-residue polypeptide: ATP phosphoribosyltransferase (285 aa).

Belongs to the ATP phosphoribosyltransferase family. Long subfamily. Requires Mg(2+) as cofactor.

It localises to the cytoplasm. It catalyses the reaction 1-(5-phospho-beta-D-ribosyl)-ATP + diphosphate = 5-phospho-alpha-D-ribose 1-diphosphate + ATP. The protein operates within amino-acid biosynthesis; L-histidine biosynthesis; L-histidine from 5-phospho-alpha-D-ribose 1-diphosphate: step 1/9. With respect to regulation, feedback inhibited by histidine. Its function is as follows. Catalyzes the condensation of ATP and 5-phosphoribose 1-diphosphate to form N'-(5'-phosphoribosyl)-ATP (PR-ATP). Has a crucial role in the pathway because the rate of histidine biosynthesis seems to be controlled primarily by regulation of HisG enzymatic activity. The polypeptide is ATP phosphoribosyltransferase (Metallosphaera sedula (strain ATCC 51363 / DSM 5348 / JCM 9185 / NBRC 15509 / TH2)).